A 727-amino-acid polypeptide reads, in one-letter code: Pre-B-cell leukemia transcription factor-interacting protein 1 (727 aa).

A compositionally biased stretch (polar residues) spans 1-10 (MASCPDSDNS). Residues 1 to 169 (MASCPDSDNS…GREPSSSQPV (169 aa)) are disordered. A phosphoserine mark is found at serine 131, serine 142, serine 143, and serine 144. Threonine 148 bears the Phosphothreonine mark. Phosphoserine is present on serine 164. 2 coiled-coil regions span residues 270 to 350 (FLLD…RGVD) and 377 to 405 (DPSLLEQHKQLEAEAKALRQELQRQWQLL). Residues 446–456 (QGINTGRSPND) show a composition bias toward polar residues. Disordered stretches follow at residues 446 to 565 (QGIN…NSPD) and 694 to 727 (LKKRSRKKEKHSWNPRVVGPREEHSRHPHHYHQG). Basic and acidic residues predominate over residues 473-563 (WGGKEKWRGG…QKHSWGKDNS (91 aa)). The short motif at 486–506 (QKAEHWKPRKEESGQERQRSW) is the Nuclear localization signal element. Serine 563 carries the post-translational modification Phosphoserine. The Nuclear localization signal motif lies at 691–716 (DKALKKRSRKKEKHSWNPRVVGPREE). The span at 694–703 (LKKRSRKKEK) shows a compositional bias: basic residues.

Interacts with ESR1, PBX1, PBX2 and PBX3. Interacts with TEX11.

It localises to the cytoplasm. The protein localises to the cytoskeleton. The protein resides in the nucleus. Regulator of pre-B-cell leukemia transcription factors (BPXs) function. Inhibits the binding of PBX1-HOX complex to DNA and blocks the transcriptional activity of E2A-PBX1. Tethers estrogen receptor-alpha (ESR1) to microtubules and allows them to influence estrogen receptors-alpha signaling. This Mus musculus (Mouse) protein is Pre-B-cell leukemia transcription factor-interacting protein 1 (Pbxip1).